Here is a 963-residue protein sequence, read N- to C-terminus: MERREEQPGAAGAGAAPALDFTVENVEKALHQLYYDPNIENKNLAQKWLMQAQVSPQAWHFSWQLLQPDKVPEIQYFGASALHIKISRYWSDIPTDQYESLKAQLFTQITRFASGSKIVLTRLCVALASLALSMMPDAWPCAVADMVRLFQAEDSPVDGQGRCLALLELLTVLPEEFQTSRLPQYRKGLVRTSLAVECGAVFPLLEQLLQQPSSPSCVRQKVLKCFSSWVQLEVPLQDCEALIQAAFAALQDSELFDSSVEAIVNAISQPDAQRYVNTLLKLIPLVLGLQEQLRQAVQNGDMETSHGICRIAVALGENHSRALLDQVEHWQSFLALVNMIMFCTGIPGHYPVNETTSSLTLTFWYTLQDDILSFEAEKQAVYQQVYRPVYFQLVDVLLHKAQFPSDEEYGFWSSDEKEQFRIYRVDISDTLMYVYEMLGAELLSNLYDKLGRLLTSSEEPYSWQHTEALLYGFQSIAETIDVNYSDVVPGLIGLIPRISISNVQLADTVMFTIGALSEWLADHPVMINSVLPLVLHALGNPELSVSSVSTLKKICRECKYDLPPYAANIVAVSQDVLMKQIHKTSQCMWLMQALGFLLSALQVEEILKNLHSLISPYIQQLEKLAEEIPNPSNKLAIVHILGLLSNLFTTLDISHHEDDHEGPELRKLPVPQGPNPVVVVLQQVFQLIQKVLSKWLNDAQVVEAVCAIFEKSVKTLLDDFAPMVPQLCEMLGRMYSTIPQASALDLTRQLVHIFAHEPAHFPPIEALFLLVTSVTLTLFQQGPRDHPDIVDSFMQLLAQALKRKPDLFLCERLDVKAVFQCAVLALKFPEAPTVKASCGFFTELLPRCGEVESVGKVVQEDGRMLLIAVLEAIGGQASRSLMDCFADILFALNKHCFSLLSMWIKEALQPPGFPSARLSPEQKDTFSQQILRERVNKRRVKEMVKEFTLLCRGLHGTDYTADY.

HEAT repeat units follow at residues glutamate 24–valine 54, proline 56–arginine 88, threonine 95–methionine 135, alanine 142–threonine 179, leucine 194–glutamine 231, leucine 236–serine 268, valine 276–aspartate 325, tryptophan 330–leucine 372, glutamate 375–leucine 438, alanine 440–isoleucine 476, valine 487–aspartate 522, proline 524–cysteine 558, leucine 562–alanine 600, valine 603–phenylalanine 648, proline 676–leucine 716, phenylalanine 720–phenylalanine 754, phenylalanine 761–arginine 803, valine 815–leucine 845, glutamate 860–asparagine 893, and phenylalanine 897–leucine 931. Residues alanine 45 to arginine 111 enclose the Importin N-terminal domain.

The protein belongs to the importin beta family. As to quaternary structure, interacts with UBC9, RAN, RBM8A, eIF-1A and PAX6. As to expression, expressed in fetal brain, heart, intestine and kidney.

It is found in the cytoplasm. The protein localises to the nucleus. Functions in nuclear protein import as nuclear transport receptor. Serves as receptor for nuclear localization signals (NLS) in cargo substrates. Is thought to mediate docking of the importin/substrate complex to the nuclear pore complex (NPC) through binding to nucleoporin and the complex is subsequently translocated through the pore by an energy requiring, Ran-dependent mechanism. At the nucleoplasmic side of the NPC, Ran binds to the importin, the importin/substrate complex dissociates and importin is re-exported from the nucleus to the cytoplasm where GTP hydrolysis releases Ran. The directionality of nuclear import is thought to be conferred by an asymmetric distribution of the GTP- and GDP-bound forms of Ran between the cytoplasm and nucleus. Mediates the nuclear import of UBC9, the RBM8A/MAGOH complex, PAX6 and probably other members of the paired homeobox family. Also mediates nuclear export of eIF-1A, and the cytoplasmic release of eIF-1A is triggered by the loading of import substrates onto IPO13. This Homo sapiens (Human) protein is Importin-13 (IPO13).